Consider the following 212-residue polypeptide: Large ribosomal subunit protein uL3 (212 aa).

N5-methylglutamine is present on Q152.

The protein belongs to the universal ribosomal protein uL3 family. In terms of assembly, part of the 50S ribosomal subunit. Forms a cluster with proteins L14 and L19. Post-translationally, methylated by PrmB.

Its function is as follows. One of the primary rRNA binding proteins, it binds directly near the 3'-end of the 23S rRNA, where it nucleates assembly of the 50S subunit. This Chromohalobacter salexigens (strain ATCC BAA-138 / DSM 3043 / CIP 106854 / NCIMB 13768 / 1H11) protein is Large ribosomal subunit protein uL3.